We begin with the raw amino-acid sequence, 310 residues long: Tagatose-6-phosphate kinase (310 aa).

The protein belongs to the carbohydrate kinase PfkB family. LacC subfamily.

The catalysed reaction is D-tagatofuranose 6-phosphate + ATP = D-tagatofuranose 1,6-bisphosphate + ADP + H(+). It functions in the pathway carbohydrate metabolism; D-tagatose 6-phosphate degradation; D-glyceraldehyde 3-phosphate and glycerone phosphate from D-tagatose 6-phosphate: step 1/2. This chain is Tagatose-6-phosphate kinase, found in Lactococcus lactis subsp. lactis (Streptococcus lactis).